Here is a 302-residue protein sequence, read N- to C-terminus: Nucleotide-binding protein Bamb_2855 (302 aa).

Residue 8–15 (GISGSGKS) participates in ATP binding. 57–60 (DARS) contacts GTP.

Belongs to the RapZ-like family.

Displays ATPase and GTPase activities. In Burkholderia ambifaria (strain ATCC BAA-244 / DSM 16087 / CCUG 44356 / LMG 19182 / AMMD) (Burkholderia cepacia (strain AMMD)), this protein is Nucleotide-binding protein Bamb_2855.